Here is a 571-residue protein sequence, read N- to C-terminus: Septation ring formation regulator EzrA (571 aa).

The Extracellular portion of the chain corresponds to 1–3 (MYY). Residues 4–22 (MLIGFIIVVIAIISAGYIL) form a helical membrane-spanning segment. Residues 23-571 (KRKHYQRINE…ESKVSVDDIE (549 aa)) are Cytoplasmic-facing. 5 coiled-coil regions span residues 169-214 (VETK…AQME), 249-298 (AQME…DTLE), 326-374 (DALA…ASGE), 400-438 (KFAE…RERL), and 474-529 (TQDW…ENHF).

This sequence belongs to the EzrA family.

The protein resides in the cell membrane. Functionally, negative regulator of FtsZ ring formation; modulates the frequency and position of FtsZ ring formation. Inhibits FtsZ ring formation at polar sites. Interacts either with FtsZ or with one of its binding partners to promote depolymerization. The protein is Septation ring formation regulator EzrA of Listeria welshimeri serovar 6b (strain ATCC 35897 / DSM 20650 / CCUG 15529 / CIP 8149 / NCTC 11857 / SLCC 5334 / V8).